Reading from the N-terminus, the 73-residue chain is ATP synthase subunit c (73 aa).

2 helical membrane passes run 4–24 (LAIG…GIGI) and 51–71 (GALA…IIIF).

Belongs to the ATPase C chain family. As to quaternary structure, F-type ATPases have 2 components, F(1) - the catalytic core - and F(0) - the membrane proton channel. F(1) has five subunits: alpha(3), beta(3), gamma(1), delta(1), epsilon(1). F(0) has three main subunits: a(1), b(2) and c(10-14). The alpha and beta chains form an alternating ring which encloses part of the gamma chain. F(1) is attached to F(0) by a central stalk formed by the gamma and epsilon chains, while a peripheral stalk is formed by the delta and b chains.

The protein localises to the cell membrane. F(1)F(0) ATP synthase produces ATP from ADP in the presence of a proton or sodium gradient. F-type ATPases consist of two structural domains, F(1) containing the extramembraneous catalytic core and F(0) containing the membrane proton channel, linked together by a central stalk and a peripheral stalk. During catalysis, ATP synthesis in the catalytic domain of F(1) is coupled via a rotary mechanism of the central stalk subunits to proton translocation. Functionally, key component of the F(0) channel; it plays a direct role in translocation across the membrane. A homomeric c-ring of between 10-14 subunits forms the central stalk rotor element with the F(1) delta and epsilon subunits. The sequence is that of ATP synthase subunit c from Caldanaerobacter subterraneus subsp. tengcongensis (strain DSM 15242 / JCM 11007 / NBRC 100824 / MB4) (Thermoanaerobacter tengcongensis).